The chain runs to 193 residues: DNA dC-&gt;dU-editing enzyme APOBEC-3H (193 aa).

In terms of domain architecture, CMP/dCMP-type deaminase spans 24–126; sequence YRRKTYLCYQ…WKYQQGLRHL (103 aa). Residue histidine 54 coordinates Zn(2+). Glutamate 56 (proton donor) is an active-site residue. 2 residues coordinate Zn(2+): cysteine 85 and cysteine 88.

The protein belongs to the cytidine and deoxycytidylate deaminase family. Homodimer. Zn(2+) is required as a cofactor. Expressed in peripheral blood mononuclear cells.

The protein resides in the cytoplasm. It catalyses the reaction a 2'-deoxycytidine in single-stranded DNA + H2O + H(+) = a 2'-deoxyuridine in single-stranded DNA + NH4(+). DNA deaminase (cytidine deaminase) which acts as an inhibitor of retrovirus replication and retrotransposon mobility via deaminase-dependent and -independent mechanisms. Selectively targets single-stranded DNA and does not deaminate double-stranded DNA or single- or double-stranded RNA. Exhibits single-stranded DNA deaminase activity (in vitro). Incorporates into the released virions of the virion infectivity factor (vif)-deficient feline immunodeficiency virus (FIV) and suppresses FIV infectivity, probably in a deaminase-dependent manner (in vitro). Induces G-to-A hypermutations in vif-deficient FIV (in vitro). The APOBEC3H/APOBEC3Z3 haplotype 5 exhibits antiviral activity against vif-proficient FIV, strains Petaluma, C36 and Shizuoka (in vitro). Does not exhibit inhibitory activity against feline leukemia virus (FeLV), feline endogenous retrovirus (RD-114 virus) or a long interspersed nuclear element-1 (LINE-1) retrotransposon (in vitro). This chain is DNA dC-&gt;dU-editing enzyme APOBEC-3H, found in Felis catus (Cat).